Reading from the N-terminus, the 298-residue chain is Oxygen-dependent coproporphyrinogen-III oxidase (298 aa).

Ser90 contacts substrate. Residues His94 and His104 each contribute to the a divalent metal cation site. The active-site Proton donor is His104. Residue 106–108 coordinates substrate; it reads NVR. Residues His143 and His173 each contribute to the a divalent metal cation site. Positions 238–273 are important for dimerization; that stretch reads YVEFNLVWDRGTLFGLQSGGRTESILMSLPPIVKWR. 256 to 258 is a binding site for substrate; it reads GGR.

Belongs to the aerobic coproporphyrinogen-III oxidase family. As to quaternary structure, homodimer. It depends on a divalent metal cation as a cofactor.

It localises to the cytoplasm. The catalysed reaction is coproporphyrinogen III + O2 + 2 H(+) = protoporphyrinogen IX + 2 CO2 + 2 H2O. Its pathway is porphyrin-containing compound metabolism; protoporphyrin-IX biosynthesis; protoporphyrinogen-IX from coproporphyrinogen-III (O2 route): step 1/1. In terms of biological role, involved in the heme biosynthesis. Catalyzes the aerobic oxidative decarboxylation of propionate groups of rings A and B of coproporphyrinogen-III to yield the vinyl groups in protoporphyrinogen-IX. The chain is Oxygen-dependent coproporphyrinogen-III oxidase from Dechloromonas aromatica (strain RCB).